A 271-amino-acid chain; its full sequence is Phosphate import ATP-binding protein PstB (271 aa).

Positions 24 to 266 (MIGKDVSVYY…PDDQRTQDYI (243 aa)) constitute an ABC transporter domain. 56-63 (GPSGCGKS) serves as a coordination point for ATP.

The protein belongs to the ABC transporter superfamily. Phosphate importer (TC 3.A.1.7) family. The complex is composed of two ATP-binding proteins (PstB), two transmembrane proteins (PstC and PstA) and a solute-binding protein (PstS).

The protein localises to the cell inner membrane. The catalysed reaction is phosphate(out) + ATP + H2O = ADP + 2 phosphate(in) + H(+). Part of the ABC transporter complex PstSACB involved in phosphate import. Responsible for energy coupling to the transport system. This Agrobacterium fabrum (strain C58 / ATCC 33970) (Agrobacterium tumefaciens (strain C58)) protein is Phosphate import ATP-binding protein PstB.